The sequence spans 544 residues: Chaperonin GroEL (544 aa).

ATP contacts are provided by residues 29-32 (TLGP), 86-90 (DGTTT), Gly413, 478-480 (NAA), and Asp494.

This sequence belongs to the chaperonin (HSP60) family. Forms a cylinder of 14 subunits composed of two heptameric rings stacked back-to-back. Interacts with the co-chaperonin GroES.

The protein localises to the cytoplasm. It carries out the reaction ATP + H2O + a folded polypeptide = ADP + phosphate + an unfolded polypeptide.. Together with its co-chaperonin GroES, plays an essential role in assisting protein folding. The GroEL-GroES system forms a nano-cage that allows encapsulation of the non-native substrate proteins and provides a physical environment optimized to promote and accelerate protein folding. This Lysinibacillus sphaericus (strain C3-41) protein is Chaperonin GroEL.